The sequence spans 192 residues: Fe/S biogenesis protein NfuA (192 aa).

C149 and C152 together coordinate [4Fe-4S] cluster.

Belongs to the NfuA family. As to quaternary structure, homodimer. It depends on [4Fe-4S] cluster as a cofactor.

In terms of biological role, involved in iron-sulfur cluster biogenesis. Binds a 4Fe-4S cluster, can transfer this cluster to apoproteins, and thereby intervenes in the maturation of Fe/S proteins. Could also act as a scaffold/chaperone for damaged Fe/S proteins. The protein is Fe/S biogenesis protein NfuA of Tolumonas auensis (strain DSM 9187 / NBRC 110442 / TA 4).